The sequence spans 120 residues: Protein Wnt-9 (120 aa).

A lipid anchor (O-palmitoleoyl serine; by PORCN) is attached at S1. An intrachain disulfide couples C90 to C101.

The protein belongs to the Wnt family. In terms of processing, palmitoleoylation is required for efficient binding to frizzled receptors. Depalmitoleoylation leads to Wnt signaling pathway inhibition.

The protein localises to the secreted. It is found in the extracellular space. Its subcellular location is the extracellular matrix. Functionally, ligand for members of the frizzled family of seven transmembrane receptors. Probable developmental protein. May be a signaling molecule which affects the development of discrete regions of tissues. Is likely to signal over only few cell diameters. The protein is Protein Wnt-9 (WNT-9) of Alopias vulpinus (Common thresher shark).